The primary structure comprises 520 residues: Bifunctional purine biosynthesis protein PurH (520 aa).

Positions 1-147 (MAKIGRALIS…KNNRDVTVVV (147 aa)) constitute an MGS-like domain.

Belongs to the PurH family.

The enzyme catalyses (6R)-10-formyltetrahydrofolate + 5-amino-1-(5-phospho-beta-D-ribosyl)imidazole-4-carboxamide = 5-formamido-1-(5-phospho-D-ribosyl)imidazole-4-carboxamide + (6S)-5,6,7,8-tetrahydrofolate. The catalysed reaction is IMP + H2O = 5-formamido-1-(5-phospho-D-ribosyl)imidazole-4-carboxamide. It participates in purine metabolism; IMP biosynthesis via de novo pathway; 5-formamido-1-(5-phospho-D-ribosyl)imidazole-4-carboxamide from 5-amino-1-(5-phospho-D-ribosyl)imidazole-4-carboxamide (10-formyl THF route): step 1/1. It functions in the pathway purine metabolism; IMP biosynthesis via de novo pathway; IMP from 5-formamido-1-(5-phospho-D-ribosyl)imidazole-4-carboxamide: step 1/1. This is Bifunctional purine biosynthesis protein PurH from Citrifermentans bemidjiense (strain ATCC BAA-1014 / DSM 16622 / JCM 12645 / Bem) (Geobacter bemidjiensis).